Reading from the N-terminus, the 328-residue chain is 2-hydroxyisoflavanone dehydratase (328 aa).

The Involved in the stabilization of the negatively charged intermediate by the formation of the oxyanion hole motif lies at 85 to 87 (HGG). Catalysis depends on residues Thr173, Asp272, and His304.

This sequence belongs to the 'GDXG' lipolytic enzyme family.

It carries out the reaction (2R,3S)-2,4',7-trihydroxyisoflavanone = daidzein + H2O + H(+). The catalysed reaction is 2-hydroxy-2,3-dihydrogenistein = genistein + H2O + H(+). It catalyses the reaction a carboxylic ester + H2O = an alcohol + a carboxylate + H(+). It functions in the pathway secondary metabolite biosynthesis; flavonoid biosynthesis. Its function is as follows. Dehydratase that mediates the biosynthesis of isoflavonoids. Can better use 2,7-dihydroxy-4'-methoxyisoflavanone as substrate. Has also a slight carboxylesterase activity toward p-nitrophenyl butyrate. The chain is 2-hydroxyisoflavanone dehydratase (HIDM) from Glycyrrhiza echinata (Licorice).